The chain runs to 225 residues: NAD(P)H-quinone oxidoreductase subunit K, chloroplastic (225 aa).

Residues C43, C44, C108, and C139 each coordinate [4Fe-4S] cluster.

This sequence belongs to the complex I 20 kDa subunit family. In terms of assembly, NDH is composed of at least 16 different subunits, 5 of which are encoded in the nucleus. Requires [4Fe-4S] cluster as cofactor.

The protein resides in the plastid. It localises to the chloroplast thylakoid membrane. It carries out the reaction a plastoquinone + NADH + (n+1) H(+)(in) = a plastoquinol + NAD(+) + n H(+)(out). The catalysed reaction is a plastoquinone + NADPH + (n+1) H(+)(in) = a plastoquinol + NADP(+) + n H(+)(out). Its function is as follows. NDH shuttles electrons from NAD(P)H:plastoquinone, via FMN and iron-sulfur (Fe-S) centers, to quinones in the photosynthetic chain and possibly in a chloroplast respiratory chain. The immediate electron acceptor for the enzyme in this species is believed to be plastoquinone. Couples the redox reaction to proton translocation, and thus conserves the redox energy in a proton gradient. The protein is NAD(P)H-quinone oxidoreductase subunit K, chloroplastic of Amborella trichopoda.